Here is a 100-residue protein sequence, read N- to C-terminus: Small ribosomal subunit protein bS20 (100 aa).

Belongs to the bacterial ribosomal protein bS20 family.

Binds directly to 16S ribosomal RNA. The protein is Small ribosomal subunit protein bS20 of Prochlorococcus marinus (strain MIT 9211).